The chain runs to 363 residues: Chorismate synthase (363 aa).

NADP(+) contacts are provided by R47 and R53. Residues 124 to 126 (RSS), G286, 301 to 305 (KPTAT), and R327 contribute to the FMN site.

Belongs to the chorismate synthase family. In terms of assembly, homotetramer. Requires FMNH2 as cofactor.

It carries out the reaction 5-O-(1-carboxyvinyl)-3-phosphoshikimate = chorismate + phosphate. The protein operates within metabolic intermediate biosynthesis; chorismate biosynthesis; chorismate from D-erythrose 4-phosphate and phosphoenolpyruvate: step 7/7. In terms of biological role, catalyzes the anti-1,4-elimination of the C-3 phosphate and the C-6 proR hydrogen from 5-enolpyruvylshikimate-3-phosphate (EPSP) to yield chorismate, which is the branch point compound that serves as the starting substrate for the three terminal pathways of aromatic amino acid biosynthesis. This reaction introduces a second double bond into the aromatic ring system. In Thermosynechococcus vestitus (strain NIES-2133 / IAM M-273 / BP-1), this protein is Chorismate synthase.